A 181-amino-acid chain; its full sequence is TATA-box-binding protein (181 aa).

Tandem repeats lie at residues 8–84 and 99–175.

It belongs to the TBP family.

Its function is as follows. General factor that plays a role in the activation of archaeal genes transcribed by RNA polymerase. Binds specifically to the TATA box promoter element which lies close to the position of transcription initiation. This chain is TATA-box-binding protein, found in Methanobrevibacter smithii (strain ATCC 35061 / DSM 861 / OCM 144 / PS).